We begin with the raw amino-acid sequence, 609 residues long: Putative cell agglutination protein pfl4 (609 aa).

Positions 1–21 (MLFLRFFIFTFFTSIFTVVVS) are cleaved as a signal peptide. An N-linked (GlcNAc...) asparagine glycan is attached at N75. The interval 75–391 (NHSTIYTTIN…ASTVVVIPTA (317 aa)) is 9 X 36 AA approximate tandem repeats. 9 tandem repeats follow at residues 77–110 (STIY…EPTA), 111–146 (GTVT…EPLA), 147–182 (GTVT…EPAV), 183–218 (GTVT…EPTA), 219–254 (GTVT…EPAV), 255–290 (GTVT…EPAV), 291–325 (GTVT…QPTG), 326–361 (GTVT…LPGP), and 362–391 (STIY…IPTA). A glycan (N-linked (GlcNAc...) asparagine) is linked at N161. The PA14 domain maps to 427–589 (FTQPAYFGSS…NSYNPTSYAY (163 aa)).

It belongs to the mam3/map4 family.

It is found in the cell surface. In terms of biological role, may be involved in agglutination during conjugation or other aspects of colony formation. Induces flocculation when overexpressed. This chain is Putative cell agglutination protein pfl4, found in Schizosaccharomyces pombe (strain 972 / ATCC 24843) (Fission yeast).